The sequence spans 431 residues: Glutamate-1-semialdehyde 2,1-aminomutase (431 aa).

Lysine 269 is subject to N6-(pyridoxal phosphate)lysine.

It belongs to the class-III pyridoxal-phosphate-dependent aminotransferase family. HemL subfamily. In terms of assembly, homodimer. The cofactor is pyridoxal 5'-phosphate.

Its subcellular location is the cytoplasm. The enzyme catalyses (S)-4-amino-5-oxopentanoate = 5-aminolevulinate. It functions in the pathway porphyrin-containing compound metabolism; protoporphyrin-IX biosynthesis; 5-aminolevulinate from L-glutamyl-tRNA(Glu): step 2/2. Its pathway is porphyrin-containing compound metabolism; chlorophyll biosynthesis. The protein is Glutamate-1-semialdehyde 2,1-aminomutase of Chlorobium limicola (strain DSM 245 / NBRC 103803 / 6330).